Here is a 187-residue protein sequence, read N- to C-terminus: MQIKTYKIKDICDIKRGRVISKLYIKNNPGEFPVYSSATVNNGEIGRIKDCDLKGEYVTWTTDGAQAGSVFYRNGQFNATNVCGILKVNNDEIYPKFLAYALRLKAPKFVNYACPIPKLMQGTLAEIELDFTSKKIQEKIATILDTFTELSAELSAELSAELSAELRERKKQYVFYSDYLLNPKNWK.

It belongs to the type-I restriction system S methylase family. As to quaternary structure, the methyltransferase is composed of M and S polypeptides.

The N-terminal section of a specificity (S) subunit of a type I methyltransferase (MTase); this subunit dictates DNA sequence specificity. The single R subunit has multiple frameshifts and is probably not expressed. The protein is Putative type I specificity subunit S.MpnORF289P N-terminus of Mycoplasma pneumoniae (strain ATCC 29342 / M129 / Subtype 1) (Mycoplasmoides pneumoniae).